Here is a 558-residue protein sequence, read N- to C-terminus: CTP synthase (558 aa).

Residues 1–267 are amidoligase domain; the sequence is MTKFVFVTGG…AQQTLELLNL (267 aa). Ser13 is a binding site for CTP. Ser13 serves as a coordination point for UTP. Residues 14-19 and Asp71 contribute to the ATP site; that span reads SIGKGI. The Mg(2+) site is built by Asp71 and Glu141. CTP-binding positions include 148–150, 188–193, and Lys224; these read DIE and KTKPTQ. Residues 188 to 193 and Lys224 contribute to the UTP site; that span reads KTKPTQ. Positions 292–534 constitute a Glutamine amidotransferase type-1 domain; the sequence is EVALVGKYVQ…VKASVDYNHV (243 aa). Position 354 (Gly354) interacts with L-glutamine. The Nucleophile; for glutamine hydrolysis role is filled by Cys381. Residues 382–385, Glu405, and Arg462 contribute to the L-glutamine site; that span reads MGMQ. Catalysis depends on residues His507 and Glu509.

Belongs to the CTP synthase family. In terms of assembly, homotetramer.

The enzyme catalyses UTP + L-glutamine + ATP + H2O = CTP + L-glutamate + ADP + phosphate + 2 H(+). It carries out the reaction L-glutamine + H2O = L-glutamate + NH4(+). The catalysed reaction is UTP + NH4(+) + ATP = CTP + ADP + phosphate + 2 H(+). It functions in the pathway pyrimidine metabolism; CTP biosynthesis via de novo pathway; CTP from UDP: step 2/2. Its activity is regulated as follows. Allosterically activated by GTP, when glutamine is the substrate; GTP has no effect on the reaction when ammonia is the substrate. The allosteric effector GTP functions by stabilizing the protein conformation that binds the tetrahedral intermediate(s) formed during glutamine hydrolysis. Inhibited by the product CTP, via allosteric rather than competitive inhibition. Catalyzes the ATP-dependent amination of UTP to CTP with either L-glutamine or ammonia as the source of nitrogen. Regulates intracellular CTP levels through interactions with the four ribonucleotide triphosphates. This chain is CTP synthase, found in Gloeothece citriformis (strain PCC 7424) (Cyanothece sp. (strain PCC 7424)).